The chain runs to 556 residues: MDSLARQSAKICPFVSRVTSSMQQVQVLHKTNMSAMAQQCPVMRRAMAARGYVTASPPAGAAAADVGEARPITPVLERGTQERTFDYDGLFETELQKKRLDSSYRFFNNINRLAKEYPMAHRLEEEDKVTVWCSNDYLTYSRNEKVMETMKRTIDKYGAGAGGTRNIAGHNRHAMRLEAELAALHKKEGALVFSSCFVANDAVLSLLGQKMPNMVIFSDEMNHASMIMGIKHANVQKHIFRHNDLQHLEELLAMYPKSQPKLIAFESVYSMSGSVADIRKICDLAEKYGALTFLDEVHSVGLYGPHGAGVAEHLDFEAHRKAGLASPAQTTVLDRVDMITATLGKSFGSVGGYLAASEKLVDFVRSYAPGFIFTSSLPPAVMAGSAAAVFDQRSSLHLRQLQQKHTSYVKTGLGDLGIPVQPNPSHIVPVLVGNPDLAKRASDILMEKHRIYVQAINFPTVPRGTERLRITPTPGHTNDLSDVLLDAMDDVWKTLQLPRVSDWAAHGGLLGVGEPDYVPEANLWTEEQMSLTNDDLHPSVFSPVEKFLEVSSGIKA.

The N-terminal 46 residues, 1 to 46 (MDSLARQSAKICPFVSRVTSSMQQVQVLHKTNMSAMAQQCPVMRRA), are a transit peptide targeting the mitochondrion. Residues Arg105, Ser218, and Lys237 each contribute to the substrate site. Residues Ser270, His298, and Thr342 each contribute to the pyridoxal 5'-phosphate site. Lys345 is an active-site residue. Lys345 carries the N6-(pyridoxal phosphate)lysine modification. Residues Thr374 and Ser375 each coordinate pyridoxal 5'-phosphate. Thr460 is a binding site for substrate.

Belongs to the class-II pyridoxal-phosphate-dependent aminotransferase family. Homodimer. Requires pyridoxal 5'-phosphate as cofactor.

Its subcellular location is the mitochondrion matrix. It catalyses the reaction succinyl-CoA + glycine + H(+) = 5-aminolevulinate + CO2 + CoA. The protein operates within porphyrin-containing compound metabolism; protoporphyrin-IX biosynthesis; 5-aminolevulinate from glycine: step 1/1. In terms of biological role, catalyzes the synthesis of 5-aminolevulinate (ALA) from succinyl-CoA and glycine, the first and rate-limiting step in heme biosynthesis. The polypeptide is 5-aminolevulinate synthase, mitochondrial (HEM1) (Eremothecium gossypii (strain ATCC 10895 / CBS 109.51 / FGSC 9923 / NRRL Y-1056) (Yeast)).